A 125-amino-acid polypeptide reads, in one-letter code: SNRPMPLNTYQFRNMIQCTVPSRSWWDFADYGCYCGCGSGTPVDDLDRCCQVHCNCYRQAGEISGCRPKFKTYTYECSGGTLTCKGDNNACAASSCDCDRLAAICFAGAPYNDNNYNIDLKARCN.

Residue S1 is a signal peptide. Residues 2–7 constitute a propeptide that is removed on maturation; that stretch reads NRPMPL. Cystine bridges form between C18-C77, C33-C124, C35-C50, C37-C54, C49-C105, C56-C98, C66-C91, and C84-C96. Residue F28 participates in N-acetyl-beta-D-glucosamine binding. A Zn(2+)-binding site is contributed by D30. 2 residues coordinate Ca(2+): Y34 and G36. 2 residues coordinate N-acetyl-beta-D-glucosamine: H53 and K69. H53 is a catalytic residue. Zn(2+) is bound at residue E76. Residue D99 is part of the active site. A Zn(2+)-binding site is contributed by N117.

Heterodimer formed between isoform 5 and isoform 6 in presence of zinc ion and monomer in absence of zinc ion. It depends on Ca(2+) as a cofactor. Expressed by the venom gland.

The protein resides in the secreted. The enzyme catalyses a 1,2-diacyl-sn-glycero-3-phosphocholine + H2O = a 1-acyl-sn-glycero-3-phosphocholine + a fatty acid + H(+). Its function is as follows. PLA2 catalyzes the calcium-dependent hydrolysis of the 2-acyl groups in 3-sn-phosphoglycerides. The polypeptide is Acidic phospholipase A2 5 (Naja sagittifera (Andaman cobra)).